The primary structure comprises 140 residues: UPF0102 protein Ppro_1186 (140 aa).

Residues methionine 1 to glycine 27 are disordered. Over residues glutamate 10–serine 25 the composition is skewed to polar residues.

The protein belongs to the UPF0102 family.

The sequence is that of UPF0102 protein Ppro_1186 from Pelobacter propionicus (strain DSM 2379 / NBRC 103807 / OttBd1).